We begin with the raw amino-acid sequence, 655 residues long: p-hydroxybenzoic acid efflux pump subunit AaeB (655 aa).

A run of 11 helical transmembrane segments spans residues 13–33 (FAVK…HFQL), 38–58 (WAVL…GGEP), 69–89 (LRII…ISMI), 93–113 (LLMI…SSLV), 121–141 (WGLS…EPLL), 152–172 (EIVI…PRSI), 370–390 (LFWL…IAVV), 407–427 (FIYG…VIIP), 431–451 (QSML…GIEV), 459–479 (MGAL…TFHF), and 482–502 (FLDS…VILL).

This sequence belongs to the aromatic acid exporter ArAE (TC 2.A.85) family.

It is found in the cell inner membrane. Forms an efflux pump with AaeA. Could function as a metabolic relief valve, allowing to eliminate certain compounds when they accumulate to high levels in the cell. This chain is p-hydroxybenzoic acid efflux pump subunit AaeB, found in Salmonella heidelberg (strain SL476).